A 955-amino-acid chain; its full sequence is Disintegrin and metalloproteinase domain-containing protein 19 (955 aa).

An N-terminal signal peptide occupies residues 1-25 (MPGGAGAARLCLLAFALQPLRPRAA). Positions 26-202 (REPGWTRGSE…QTKKRPRRMK (177 aa)) are excised as a propeptide. The Cysteine switch signature appears at 130-137 (STCRGIRG). A Zn(2+)-binding site is contributed by Cys132. N-linked (GlcNAc...) asparagine glycosylation is present at Asn144. Over 203 to 699 (REDLNSMKYV…IDSGPMPPES (497 aa)) the chain is Extracellular. Residues 210–408 (KYVELYLVAD…GGGMCLSNMP (199 aa)) form the Peptidase M12B domain. Intrachain disulfides connect Cys320/Cys403, Cys360/Cys387, and Cys361/Cys370. His345 is a binding site for Zn(2+). Glu346 is a catalytic residue. Zn(2+)-binding residues include His349 and His355. Residues 416 to 502 (GRRCGNGYLE…HCPTNFYQMD (87 aa)) form the Disintegrin domain. 2 N-linked (GlcNAc...) asparagine glycosylation sites follow: Asn444 and Asn447. Cys474 and Cys494 are disulfide-bonded. Residue Asn645 is glycosylated (N-linked (GlcNAc...) asparagine). The 33-residue stretch at 650 to 682 (ETEGCGKKCNGHGVCNNNQNCHCLPGWAPPFCN) folds into the EGF-like domain. Intrachain disulfides connect Cys654–Cys664, Cys658–Cys670, and Cys672–Cys681. A helical membrane pass occupies residues 700–720 (VGPVVAGVLVAILVLAVLMLM). The Cytoplasmic segment spans residues 721 to 955 (YYCCRQNNKL…AKHSCFLVPA (235 aa)). Polar residues predominate over residues 753-771 (SQNSGTGHANPTFKLQTPQ). A disordered region spans residues 753 to 917 (SQNSGTGHAN…LKVKAGTRGL (165 aa)). Composition is skewed to pro residues over residues 787–796 (SQPPPRPPPD) and 833–844 (RPPPSRPIPPAP). The short motif at 833–844 (RPPPSRPIPPAP) is the SH3-binding element.

Interacts with SH3PXD2A. Requires Zn(2+) as cofactor. Post-translationally, the precursor is cleaved by a furin endopeptidase. As to expression, expressed in many normal organ tissues and several cancer cell lines.

It is found in the membrane. Participates in the proteolytic processing of beta-type neuregulin isoforms which are involved in neurogenesis and synaptogenesis, suggesting a regulatory role in glial cell. Also cleaves alpha-2 macroglobulin. May be involved in osteoblast differentiation and/or osteoblast activity in bone. The protein is Disintegrin and metalloproteinase domain-containing protein 19 (ADAM19) of Homo sapiens (Human).